The sequence spans 463 residues: Phosphoglucosamine mutase (463 aa).

The active-site Phosphoserine intermediate is the Ser-101. The Mg(2+) site is built by Ser-101, Asp-256, Asp-258, and Asp-260. Ser-101 carries the post-translational modification Phosphoserine.

It belongs to the phosphohexose mutase family. It depends on Mg(2+) as a cofactor. Post-translationally, activated by phosphorylation.

The catalysed reaction is alpha-D-glucosamine 1-phosphate = D-glucosamine 6-phosphate. Catalyzes the conversion of glucosamine-6-phosphate to glucosamine-1-phosphate. This chain is Phosphoglucosamine mutase, found in Desulforapulum autotrophicum (strain ATCC 43914 / DSM 3382 / VKM B-1955 / HRM2) (Desulfobacterium autotrophicum).